The sequence spans 902 residues: DNA mismatch repair protein MutS (902 aa).

654–661 (GPNMGGKS) serves as a coordination point for ATP.

Belongs to the DNA mismatch repair MutS family.

Its function is as follows. This protein is involved in the repair of mismatches in DNA. It is possible that it carries out the mismatch recognition step. This protein has a weak ATPase activity. This Xanthomonas axonopodis pv. citri (strain 306) protein is DNA mismatch repair protein MutS.